A 632-amino-acid polypeptide reads, in one-letter code: 1-deoxy-D-xylulose-5-phosphate synthase (632 aa).

Residues histidine 79 and 120 to 122 each bind thiamine diphosphate; that span reads GHA. Aspartate 152 provides a ligand contact to Mg(2+). Thiamine diphosphate is bound by residues 153 to 154, asparagine 181, phenylalanine 293, and glutamate 377; that span reads GA. Asparagine 181 contributes to the Mg(2+) binding site.

This sequence belongs to the transketolase family. DXPS subfamily. As to quaternary structure, homodimer. The cofactor is Mg(2+). Thiamine diphosphate serves as cofactor.

The enzyme catalyses D-glyceraldehyde 3-phosphate + pyruvate + H(+) = 1-deoxy-D-xylulose 5-phosphate + CO2. It participates in metabolic intermediate biosynthesis; 1-deoxy-D-xylulose 5-phosphate biosynthesis; 1-deoxy-D-xylulose 5-phosphate from D-glyceraldehyde 3-phosphate and pyruvate: step 1/1. Its function is as follows. Catalyzes the acyloin condensation reaction between C atoms 2 and 3 of pyruvate and glyceraldehyde 3-phosphate to yield 1-deoxy-D-xylulose-5-phosphate (DXP). The sequence is that of 1-deoxy-D-xylulose-5-phosphate synthase from Parabacteroides distasonis (strain ATCC 8503 / DSM 20701 / CIP 104284 / JCM 5825 / NCTC 11152).